We begin with the raw amino-acid sequence, 332 residues long: MSSRMAGSAILRHVGGVRLFTASATSPAAAAAAAARPFLAGGEAVPGVWGLRLMSTSSVASTEAAAKAEAKKADAEKEVVVNSYWGIEQSKKLVREDGTEWKWSCFRPWETYTADTSIDLTKHHVPKTLLDKIAYWTVKSLRFPTDIFFQRRYGCRAMMLETVAAVPGMVGGMLLHLRSLRRFEQSGGWIRTLLEEAENERMHLMTFMEVANPKWYERALVITVQGVFFNAYFLGYLLSPKFAHRVVGYLEEEAIHSYTEFLKDLEAGKIDNVPAPAIAIDYWRLPANATLKDVVTVVRADEAHHRDVNHFASDIHYQGMELKQTPAPIGYH.

The N-terminal 54 residues, 1–54 (MSSRMAGSAILRHVGGVRLFTASATSPAAAAAAAARPFLAGGEAVPGVWGLRLM), are a transit peptide targeting the mitochondrion. Residues 157–177 (AMMLETVAAVPGMVGGMLLHL) traverse the membrane as a helical segment. Fe cation-binding residues include Glu161, Glu200, and His203. The helical transmembrane segment at 219-239 (ALVITVQGVFFNAYFLGYLLS) threads the bilayer. Residues Glu251, Glu302, and His305 each coordinate Fe cation.

Belongs to the alternative oxidase family. In terms of assembly, homodimer; disulfide-linked. Requires Fe cation as cofactor. Expressed in roots, leaf sheaths and leaf blades.

The protein localises to the mitochondrion inner membrane. The enzyme catalyses 2 a ubiquinol + O2 = 2 a ubiquinone + 2 H2O. In terms of biological role, catalyzes the cyanide-resistant oxidation of ubiquinol and the reduction of molecular oxygen to water, but does not translocate protons and consequently is not linked to oxidative phosphorylation. May increase respiration when the cytochrome respiratory pathway is restricted, or in response to low temperatures. The chain is Ubiquinol oxidase 1a, mitochondrial from Oryza sativa subsp. japonica (Rice).